The following is a 55-amino-acid chain: Large ribosomal subunit protein bL33 (55 aa).

It belongs to the bacterial ribosomal protein bL33 family.

In Erythrobacter litoralis (strain HTCC2594), this protein is Large ribosomal subunit protein bL33.